Consider the following 543-residue polypeptide: Reticulophagy regulator 2 (543 aa).

The next 3 helical transmembrane spans lie at 12–32 (AGGG…SLGM), 100–120 (SLRP…LDLW), and 204–224 (VPGI…PLVV). The segment covering 254-265 (LHHKHDKRKRQG) has biased composition (basic residues). A disordered region spans residues 254–287 (LHHKHDKRKRQGKNAPPGGDEPLAETESESEAEL). Residues 275 to 285 (PLAETESESEA) are compositionally biased toward acidic residues. Threonine 279 is modified (phosphothreonine). Serine 281, serine 283, serine 291, and serine 311 each carry phosphoserine. Residue threonine 334 is modified to Phosphothreonine. 2 disordered regions span residues 336-394 (VSED…DVAA) and 411-486 (HFNG…EEEA). A phosphoserine mark is found at serine 337, serine 344, serine 347, and serine 385. The segment covering 461 to 480 (APSPSILPPVPQDSPQPLPA) has biased composition (pro residues). The LIR motif motif lies at 490–495 (EDFELL). Residues 504 to 543 (NAELGLEPETPPKPPDAPPLGPDIHSLVQSDQEAQAVAEP) form a disordered region. A compositionally biased stretch (pro residues) spans 512–524 (ETPPKPPDAPPLG).

The protein belongs to the RETREG family. As to quaternary structure, interacts with ATG8 family modifier proteins MAP1LC3A, MAP1LC3B, MAP1LC3C, GABARAP, GABARAPL1 and GABARAPL2. Shows higher affinity for GABARAPL1 than for MAP1LC3B. Interacts with CANX.

Its subcellular location is the endoplasmic reticulum membrane. In terms of biological role, endoplasmic reticulum (ER)-anchored autophagy regulator which exists in an inactive state under basal conditions but is activated following cellular stress. When activated, induces ER fragmentation and mediates ER delivery into lysosomes through sequestration into autophagosomes via interaction with ATG8 family proteins. Required for collagen quality control in a LIR motif-independent manner. The polypeptide is Reticulophagy regulator 2 (Homo sapiens (Human)).